We begin with the raw amino-acid sequence, 479 residues long: Signal recognition particle subunit SRP54 1 (479 aa).

The G-domain stretch occupies residues 1-295 (MVLAELGGRI…DVKPFVSRLL (295 aa)). GTP-binding positions include 108–115 (GLQGAGKT), 190–194 (DTSGR), and 248–251 (TKMD). The M-domain stretch occupies residues 296–479 (GKGDWSGLVD…MMGMFGGGGK (184 aa)).

It belongs to the GTP-binding SRP family. SRP54 subfamily. Component of a signal recognition particle (SRP) complex that consists of a 7SL RNA molecule of 300 nucleotides and six protein subunits: SRP72, SRP68, SRP54, SRP19, SRP14 and SRP9.

It is found in the cytoplasm. The protein resides in the endoplasmic reticulum. It carries out the reaction GTP + H2O = GDP + phosphate + H(+). Component of the signal recognition particle (SRP) complex, a ribonucleoprotein complex that mediates the cotranslational targeting of secretory and membrane proteins to the endoplasmic reticulum (ER). As part of the SRP complex, associates with the SRP receptor (SR) component SRPRA to target secretory proteins to the endoplasmic reticulum membrane. Binds to the signal sequence of presecretory proteins when they emerge from the ribosomes. Displays basal GTPase activity, and stimulates reciprocal GTPase activation of the SR subunit SRPRA. Forms a guanosine 5'-triphosphate (GTP)-dependent complex with the SR subunit SRPRA. SR compaction and GTPase mediated rearrangement of SR drive SRP-mediated cotranslational protein translocation into the ER. Requires the presence of SRP9/SRP14 and/or SRP19 to stably interact with RNA. In Arabidopsis thaliana (Mouse-ear cress), this protein is Signal recognition particle subunit SRP54 1 (SRP-54A).